Here is a 195-residue protein sequence, read N- to C-terminus: Imidazoleglycerol-phosphate dehydratase (195 aa).

Belongs to the imidazoleglycerol-phosphate dehydratase family.

The protein localises to the cytoplasm. The catalysed reaction is D-erythro-1-(imidazol-4-yl)glycerol 3-phosphate = 3-(imidazol-4-yl)-2-oxopropyl phosphate + H2O. Its pathway is amino-acid biosynthesis; L-histidine biosynthesis; L-histidine from 5-phospho-alpha-D-ribose 1-diphosphate: step 6/9. In Ruegeria pomeroyi (strain ATCC 700808 / DSM 15171 / DSS-3) (Silicibacter pomeroyi), this protein is Imidazoleglycerol-phosphate dehydratase.